The following is a 464-amino-acid chain: Probable LL-diaminopimelate aminotransferase, chloroplastic (464 aa).

Residues 1–39 (MAASPAAGAAAATVSSFVSPSSFSSVKASKPDRLRPARR) constitute a chloroplast transit peptide. Residue Gly-102 participates in substrate binding. Tyr-132 is a binding site for pyridoxal 5'-phosphate. The substrate site is built by Glu-135, Lys-167, Tyr-190, and Asn-247. 5 residues coordinate pyridoxal 5'-phosphate: Asn-247, Asp-275, Tyr-278, Ser-305, and Ser-307. The residue at position 308 (Lys-308) is an N6-(pyridoxal phosphate)lysine. Arg-316 contacts pyridoxal 5'-phosphate. Residues Asn-347 and Arg-442 each contribute to the substrate site.

Belongs to the class-I pyridoxal-phosphate-dependent aminotransferase family. LL-diaminopimelate aminotransferase subfamily. In terms of assembly, homodimer. Requires pyridoxal 5'-phosphate as cofactor.

Its subcellular location is the plastid. It localises to the chloroplast. The catalysed reaction is (2S,6S)-2,6-diaminopimelate + 2-oxoglutarate = (S)-2,3,4,5-tetrahydrodipicolinate + L-glutamate + H2O + H(+). It participates in amino-acid biosynthesis; L-lysine biosynthesis via DAP pathway; LL-2,6-diaminopimelate from (S)-tetrahydrodipicolinate (aminotransferase route): step 1/1. Its function is as follows. Required for lysine biosynthesis. Catalyzes the direct conversion of tetrahydrodipicolinate to LL-diaminopimelate, a reaction that requires three enzymes in E.coli. This is Probable LL-diaminopimelate aminotransferase, chloroplastic (AGD2) from Oryza sativa subsp. japonica (Rice).